Here is a 147-residue protein sequence, read N- to C-terminus: DNA-directed RNA polymerase RPB6 homolog (147 aa).

It belongs to the archaeal RpoK/eukaryotic RPB6 RNA polymerase subunit family. Part of the viral DNA-directed RNA polymerase that consists of 8 polII-like subunits (RPB1, RPB2, RPB3, RPB5, RPB6, RPB7, RPB9, RPB10), a capping enzyme and a termination factor.

It is found in the host cytoplasm. The protein localises to the virion. In terms of biological role, component of the DNA-directed RNA polymerase (RNAP) that catalyzes the transcription in the cytoplasm of viral DNA into RNA using the four ribonucleoside triphosphates as substrates. This is DNA-directed RNA polymerase RPB6 homolog from Ornithodoros (relapsing fever ticks).